A 298-amino-acid chain; its full sequence is MRYFPLLLCLLAITTAEFRNATKQVPVVMWHGMGDCCCNPLSMGSVKKLFEEQIPGVYVHSLQLGSSITKDIEHGFYANTNELVYMACIKIKNDPELKNGYNAIGFSQGAQFLRAVAQRCPNPPMKNLVSVGGQHQGVFGAPYCIGDNIMCNGVRRLIDLGAYLPFVQKRVVQAQYWHDPNQVEEYKKRSIFLADINNENNNNPTYKRNLLSLKNLVLVKFNQDHMVVPKDSSWFGFYKDGDIDTILPMNETDLYKEDRIGLKKLHESGRIHFMDVDGDHLQIPRSVLVNDIIKKYFM.

Positions 1 to 16 (MRYFPLLLCLLAITTA) are cleaved as a signal peptide. Asparagine 20 carries N-linked (GlcNAc...) asparagine glycosylation. 3 disulfide bridges follow: cysteine 37/cysteine 38, cysteine 88/cysteine 120, and cysteine 144/cysteine 151. The active-site Nucleophile is serine 107. Residue aspartate 224 is part of the active site. N-linked (GlcNAc...) asparagine glycosylation is present at asparagine 250. Histidine 280 is an active-site residue.

Belongs to the palmitoyl-protein thioesterase family.

It carries out the reaction S-hexadecanoyl-L-cysteinyl-[protein] + H2O = L-cysteinyl-[protein] + hexadecanoate + H(+). Removes thioester-linked fatty acyl groups such as palmitate (hexadecanoate) from modified cysteine residues in proteins or peptides. This Caenorhabditis elegans protein is Palmitoyl-protein thioesterase 1 (ppt-1).